Reading from the N-terminus, the 191-residue chain is Thymidine kinase (191 aa).

ATP contacts are provided by residues 15–22 and 88–91; these read GSMFSGKS and DEVQ. E89 (proton acceptor) is an active-site residue. The Zn(2+) site is built by C145, C148, C183, and H186.

Belongs to the thymidine kinase family. In terms of assembly, homotetramer.

It is found in the cytoplasm. The catalysed reaction is thymidine + ATP = dTMP + ADP + H(+). This chain is Thymidine kinase, found in Macrococcus caseolyticus (strain JCSC5402) (Macrococcoides caseolyticum).